The sequence spans 616 residues: Chaperone protein HscA (616 aa).

Belongs to the heat shock protein 70 family.

Chaperone involved in the maturation of iron-sulfur cluster-containing proteins. Has a low intrinsic ATPase activity which is markedly stimulated by HscB. Involved in the maturation of IscU. This is Chaperone protein HscA from Escherichia coli O45:K1 (strain S88 / ExPEC).